Here is a 513-residue protein sequence, read N- to C-terminus: ATP synthase subunit alpha (513 aa).

Position 169 to 176 (169 to 176 (GDRQTGKT)) interacts with ATP.

Belongs to the ATPase alpha/beta chains family. F-type ATPases have 2 components, CF(1) - the catalytic core - and CF(0) - the membrane proton channel. CF(1) has five subunits: alpha(3), beta(3), gamma(1), delta(1), epsilon(1). CF(0) has three main subunits: a(1), b(2) and c(9-12). The alpha and beta chains form an alternating ring which encloses part of the gamma chain. CF(1) is attached to CF(0) by a central stalk formed by the gamma and epsilon chains, while a peripheral stalk is formed by the delta and b chains.

It localises to the cell inner membrane. It catalyses the reaction ATP + H2O + 4 H(+)(in) = ADP + phosphate + 5 H(+)(out). In terms of biological role, produces ATP from ADP in the presence of a proton gradient across the membrane. The alpha chain is a regulatory subunit. The polypeptide is ATP synthase subunit alpha (Pseudoalteromonas translucida (strain TAC 125)).